Consider the following 4834-residue polypeptide: E3 ubiquitin-protein ligase HERC2 (4834 aa).

The disordered stretch occupies residues 50-88 (TESTQNGELPPRKDDSVEPSGTKKEDLNDKEKKDEEETP). Basic and acidic residues predominate over residues 59–84 (PPRKDDSVEPSGTKKEDLNDKEKKDE). Thr272 is modified (phosphothreonine). Residues 415–461 (PTSHKGSLQEVIGWGLIGWKYYANVIGPIQCEGLANLGVTQIACAEK) form an RCC1 1-1 repeat. One copy of the RCC1 1-2 repeat lies at 462–512 (RFLILSRNGRVYTQAYNSDTLAPQLVQGLASRNIVKIAAHSDGHHYLALAA). An RCC1 1-3 repeat occupies 513–568 (TGEVYSWGCGDGGRLGHGDTVPLEEPKVISAFSGKQAGKHVVHIACGSTYSAAITA). The RCC1 1-4 repeat unit spans residues 569–620 (EGELYTWGRGNYGRLGHGSSEDEAIPMLVAGLKGLKVIDVACGSGDAQTLAV). The RCC1 1-5 repeat unit spans residues 623-674 (NGQVWSWGDGDYGKLGRGGSDGCKTPKLIEKLQDLDVVKVRCGSQFSIALTK). The residue at position 647 (Thr647) is a Phosphothreonine. An RCC1 1-6 repeat occupies 675–726 (DGQVYSWGKGDNQRLGHGTEEHVRYPKLLEGLQGKKVIDVAAGSTHCLALTE). The stretch at 728–778 (SEVHSWGSNDQCQHFDTLRVTKPEPAALPGLDTKHIVGIACGPAQSFAWSS) is one RCC1 1-7 repeat. Positions 948 to 980 (LHAAITAEIQDIEAKKEAQKEKEIDEQEANAST) form a coiled coil. One can recognise a Cytochrome b5 heme-binding domain in the interval 1207 to 1283 (VTLIRKADLE…MHAFCVGQYL (77 aa)). The segment at 1555–1575 (RKKRVPKKPESTDDEEKIGNE) is disordered. A compositionally biased stretch (acidic residues) spans 1566–1575 (TDDEEKIGNE). Phosphoserine is present on Ser1577. One can recognise an MIB/HERC2 domain in the interval 1859–1932 (SGPELAAMMK…KYDLKLAELP (74 aa)). The interval 1933 to 1958 (AAAQPSAEDSDTEDDSEAEQTERNIH) is disordered. Positions 1940–1951 (EDSDTEDDSEAE) are enriched in acidic residues. Residue Ser1942 is modified to Phosphoserine. Residue Thr1944 is modified to Phosphothreonine. Residue Ser2454 is modified to Phosphoserine. The 77-residue stretch at 2554–2630 (RADFLSNDDY…RYIHVELIGY (77 aa)) folds into the CPH domain. The segment at 2703–2755 (HPGVTCDGCQMFPINGSRFKCRNCDDFDFCETCFKTKKHNTRHTFGRINEPGQ) adopts a ZZ-type zinc-finger fold. The Zn(2+) site is built by Cys2708, Cys2711, Cys2723, Cys2726, Cys2732, Cys2735, His2741, and His2745. Residues 2759-2936 (FCGRSGKQLK…ASDNEEEEDE (178 aa)) form the DOC domain. A Phosphoserine modification is found at Ser2928. Residues 2958 to 3009 (RTKVFVWGLNDKDQLGGLKGSKIKVPSFSETLSALNVVQVAGGSKSLFAVTV) form an RCC1 2-1 repeat. Residues 3010 to 3064 (EGKVYACGEATNGRLGLGISSGTVPIPRQITALSSYVVKKVAVHSGGRHATALTV) form an RCC1 2-2 repeat. The stretch at 3065 to 3116 (DGKVFSWGEGDDGKLGHFSRMNCDKPRLIEALKTKRIRDIACGSSHSAALTS) is one RCC1 2-3 repeat. The RCC1 2-4 repeat unit spans residues 3118–3168 (GELYTWGLGEYGRLGHGDNTTQLKPKMVKVLLGHRVIQVACGSRDAQTLAL). The RCC1 2-5 repeat unit spans residues 3171–3222 (EGLVFSWGDGDFGKLGRGGSEGCNIPQNIERLNGQGVCQIECGAQFSLALTK). An RCC1 2-6 repeat occupies 3224–3274 (GVVWTWGKGDYFRLGHGSDVHVRKPQVVEGLRGKKIVHVAVGALHCLAVTD). Residues 3275–3326 (SGQVYAWGDNDHGQQGNGTTTVNRKPTLVQGLEGQKITRVACGSSHSVAWTT) form an RCC1 2-7 repeat. 2 stretches are compositionally biased toward polar residues: residues 3602–3611 (SQSGRLSSQP) and 3618–3629 (HPYTDDTSTSGT). Residues 3602–3629 (SQSGRLSSQPVVVESSHPYTDDTSTSGT) are disordered. One copy of the RCC1 3-1 repeat lies at 3951–4002 (SGTIYGWGHNHRGQLGGIEGAKVKVPTPCEALATLRPVQLIGGEQTLFAVTA). One copy of the RCC1 3-2 repeat lies at 4004–4056 (GKLYATGYGAGGRLGIGGTESVSTPTLLESIQHVFIKKVAVNSGGKHCLALSS). Residues 4058–4108 (GEVYSWGEAEDGKLGHGNRSPCDRPRVIESLRGIEVVDVAAGGAHSACVTA) form an RCC1 3-3 repeat. Residues 4110–4162 (GDLYTWGKGRYGRLGHSDSEDQLKPKLVEALQGHRVVDIACGSGDAQTLCLTD) form an RCC1 3-4 repeat. The stretch at 4164–4214 (DTVWSWGDGDYGKLGRGGSDGCKVPMKIDSLTGLGVVKVECGSQFSVALTK) is one RCC1 3-5 repeat. The stretch at 4216 to 4266 (GAVYTWGKGDYHRLGHGSDDHVRRPRQVQGLQGKKVIAIATGSLHCVCCTE) is one RCC1 3-6 repeat. Residues 4268 to 4318 (GEVYTWGDNDEGQLGDGTTNAIQRPRLVAALQGKKVNRVACGSAHTLAWST) form an RCC1 3-7 repeat. One can recognise an HECT domain in the interval 4457–4794 (DSLLLPHRVW…IHFCKSIDTD (338 aa)). Residue Cys4762 is the Glycyl thioester intermediate of the active site. The interval 4804–4834 (EPAADDSSDDSDNEDVDSFASDSTQDYLTGH) is disordered. Positions 4806–4820 (AADDSSDDSDNEDVD) are enriched in acidic residues. A phosphoserine mark is found at Ser4810, Ser4811, and Ser4814. Residues 4823–4834 (ASDSTQDYLTGH) show a composition bias toward polar residues. Thr4827 is subject to Phosphothreonine.

In terms of assembly, interacts (when phosphorylated at Thr-4827 and sumoylated) with RNF8 (via FHA domain); this interaction increases after ionizing radiation (IR) treatment. Interacts with XPA. Interacts with NEURL4. Via its interaction with NEURL4, may indirectly interact with CCP110 and CEP97. Phosphorylation at Thr-4827 is required for interaction with RNF8. Post-translationally, sumoylated with SUMO1 by PIAS4 in response to double-strand breaks (DSBs), promoting the interaction with RNF8.

The protein localises to the cytoplasm. It localises to the cytoskeleton. Its subcellular location is the microtubule organizing center. It is found in the centrosome. The protein resides in the centriole. The protein localises to the nucleus. The enzyme catalyses S-ubiquitinyl-[E2 ubiquitin-conjugating enzyme]-L-cysteine + [acceptor protein]-L-lysine = [E2 ubiquitin-conjugating enzyme]-L-cysteine + N(6)-ubiquitinyl-[acceptor protein]-L-lysine.. Its pathway is protein modification; protein ubiquitination. E3 ubiquitin-protein ligase that regulates ubiquitin-dependent retention of repair proteins on damaged chromosomes. Recruited to sites of DNA damage in response to ionizing radiation (IR) and facilitates the assembly of UBE2N and RNF8 promoting DNA damage-induced formation of 'Lys-63'-linked ubiquitin chains. Acts as a mediator of binding specificity between UBE2N and RNF8. Involved in the maintenance of RNF168 levels. E3 ubiquitin-protein ligase that promotes the ubiquitination and proteasomal degradation of XPA which influences the circadian oscillation of DNA excision repair activity. By controlling the steady-state expression of the IGF1R receptor, indirectly regulates the insulin-like growth factor receptor signaling pathway. Also modulates iron metabolism by regulating the basal turnover of FBXL5. In Homo sapiens (Human), this protein is E3 ubiquitin-protein ligase HERC2.